Reading from the N-terminus, the 588-residue chain is Cyclin-dependent kinase 8 (588 aa).

The Protein kinase domain maps to 26 to 348 (FENSKEIGRG…CEEAMNDIYF (323 aa)). ATP contacts are provided by residues 32-40 (IGRGTYGLV) and Lys60. The active-site Proton acceptor is Asp158. Disordered regions lie at residues 376 to 426 (MTVA…GAHP), 510 to 529 (PGPS…AVPG), and 546 to 588 (MRAP…QYHR). A compositionally biased stretch (low complexity) spans 382–426 (QAQQQHQQQQVQMQQQPQMGQQQMMGQPQMVQPQMGQPPMGGAHP). Residues 557–588 (MPGRGMAPPQMGQQQPGPNQQQQQQWQQQYHR) show a composition bias toward low complexity.

It belongs to the protein kinase superfamily. CMGC Ser/Thr protein kinase family. CDC2/CDKX subfamily. Component of the Mediator complex. The cofactor is Mg(2+).

It localises to the nucleus. The catalysed reaction is L-seryl-[protein] + ATP = O-phospho-L-seryl-[protein] + ADP + H(+). It catalyses the reaction L-threonyl-[protein] + ATP = O-phospho-L-threonyl-[protein] + ADP + H(+). The enzyme catalyses [DNA-directed RNA polymerase] + ATP = phospho-[DNA-directed RNA polymerase] + ADP + H(+). In terms of biological role, component of the Mediator complex, a coactivator involved in regulated gene transcription of nearly all RNA polymerase II-dependent genes. Mediator functions as a bridge to convey information from gene-specific regulatory proteins to the basal RNA polymerase II transcription machinery. Mediator is recruited to promoters by direct interactions with regulatory proteins and serves as a scaffold for the assembly of a functional pre-initiation complex with RNA polymerase II and the general transcription factors. Phosphorylates the CTD (C-terminal domain) of the large subunit of RNA polymerase II (RNAp II), which may inhibit the formation of a transcription initiation complex. This chain is Cyclin-dependent kinase 8 (cdk-8), found in Caenorhabditis elegans.